Consider the following 1043-residue polypeptide: Unconventional myosin-Ia (1043 aa).

Residues 8–694 enclose the Myosin motor domain; the sequence is VGVEDLVLLE…TLFYLEEQRR (687 aa). 101-108 contacts ATP; that stretch reads GESGSGKT. The segment at 571–593 is actin-binding; it reads VAILMKNLYSKSPNYIRCIKPNE. 3 IQ domains span residues 697–719, 720–742, and 743–772; these read LQQLATLIQKIYRGWRCRTHYQL, MRKSQILISSWFRGNMQKKCYGK, and IKASVLLIQAFVRGWKARKNYRKYFRSEAA. The TH1 domain occupies 858–1042; it reads KASYPQSVPI…KGSHCLEVTV (185 aa).

It belongs to the TRAFAC class myosin-kinesin ATPase superfamily. Myosin family. Post-translationally, phosphorylated by ALPK1.

Involved in directing the movement of organelles along actin filaments. This chain is Unconventional myosin-Ia (MYO1A), found in Homo sapiens (Human).